We begin with the raw amino-acid sequence, 846 residues long: Cap-specific mRNA (nucleoside-2'-O-)-methyltransferase 1 (846 aa).

The tract at residues Met-1–Ser-81 is disordered. The short motif at Lys-2–Arg-20 is the Bipartite nuclear localization signal element. The segment covering Asn-27–Glu-45 has biased composition (polar residues). Residues Tyr-87 to Lys-133 form the G-patch domain. Residues Lys-203 to Asp-207 and Arg-218 contribute to the substrate site. The region spanning Phe-231–Lys-450 is the RrmJ-type SAM-dependent 2'-O-MTase domain. An S-adenosyl-L-methionine-binding site is contributed by Asn-234. The active site involves Lys-239. Residues Cys-277–Phe-283 and Asp-335–Val-336 contribute to the S-adenosyl-L-methionine site. Residue Asp-364 is part of the active site. Asn-374–Gln-376 is a binding site for substrate. The Proton acceptor role is filled by Lys-404. A substrate-binding site is contributed by Asn-439. Residues Lys-752 to Glu-786 form the WW domain.

The protein localises to the nucleus. It catalyses the reaction a 5'-end (N(7)-methyl 5'-triphosphoguanosine)-ribonucleoside in mRNA + S-adenosyl-L-methionine = a 5'-end (N(7)-methyl 5'-triphosphoguanosine)-(2'-O-methyl-ribonucleoside) in mRNA + S-adenosyl-L-homocysteine + H(+). Functionally, S-adenosyl-L-methionine-dependent methyltransferase that mediates mRNA cap1 2'-O-ribose methylation to the 5'-cap structure of mRNAs. Methylates the ribose of the first nucleotide of a m(7)GpppG-capped mRNA and small nuclear RNA (snRNA) to produce m(7)GpppRm (cap1). Displays a preference for cap0 transcripts. Cap1 modification is linked to higher levels of translation. May be involved in the interferon response pathway. This Xenopus laevis (African clawed frog) protein is Cap-specific mRNA (nucleoside-2'-O-)-methyltransferase 1 (cmtr1).